A 507-amino-acid polypeptide reads, in one-letter code: Cuticlin-4 (507 aa).

The N-terminal stretch at 1-19 (MFHFTRILAAFLLPTLCFC) is a signal peptide. The Extracellular portion of the chain corresponds to 20-471 (GYSTAPSSTV…KTCFSTSRMY (452 aa)). In terms of domain architecture, ZP spans 42-280 (VCETASISLL…YGCSNTQPQC (239 aa)). The disordered stretch occupies residues 292–350 (KTTETAEPYPYDSHESGYPTRPANYPVASSRYPIPTTQAPASYPSSPAPPPPGADIDNG). Residues Asn-374 and Asn-408 are each glycosylated (N-linked (GlcNAc...) asparagine). The chain crosses the membrane as a helical span at residues 472–492 (FTLILLCLLFATTVVVFIVIV). Topologically, residues 493 to 507 (QKQRQILAQTAFFKP) are cytoplasmic.

Its subcellular location is the cell membrane. In terms of biological role, plays a role in alae formation and subsequent cuticle attachment in adults. The protein is Cuticlin-4 of Caenorhabditis elegans.